A 232-amino-acid polypeptide reads, in one-letter code: 5'-methylthioadenosine/S-adenosylhomocysteine nucleosidase (232 aa).

E12 serves as the catalytic Proton acceptor. Residues G78, V152, and 173-174 (ME) contribute to the substrate site. D197 functions as the Proton donor in the catalytic mechanism.

Belongs to the PNP/UDP phosphorylase family. MtnN subfamily. As to quaternary structure, homodimer.

It carries out the reaction S-adenosyl-L-homocysteine + H2O = S-(5-deoxy-D-ribos-5-yl)-L-homocysteine + adenine. The enzyme catalyses S-methyl-5'-thioadenosine + H2O = 5-(methylsulfanyl)-D-ribose + adenine. The catalysed reaction is 5'-deoxyadenosine + H2O = 5-deoxy-D-ribose + adenine. Its pathway is amino-acid biosynthesis; L-methionine biosynthesis via salvage pathway; S-methyl-5-thio-alpha-D-ribose 1-phosphate from S-methyl-5'-thioadenosine (hydrolase route): step 1/2. Functionally, catalyzes the irreversible cleavage of the glycosidic bond in both 5'-methylthioadenosine (MTA) and S-adenosylhomocysteine (SAH/AdoHcy) to adenine and the corresponding thioribose, 5'-methylthioribose and S-ribosylhomocysteine, respectively. Also cleaves 5'-deoxyadenosine, a toxic by-product of radical S-adenosylmethionine (SAM) enzymes, into 5-deoxyribose and adenine. Thus, is required for in vivo function of the radical SAM enzymes biotin synthase and lipoic acid synthase, that are inhibited by 5'-deoxyadenosine accumulation. In Buchnera aphidicola subsp. Acyrthosiphon pisum (strain APS) (Acyrthosiphon pisum symbiotic bacterium), this protein is 5'-methylthioadenosine/S-adenosylhomocysteine nucleosidase.